The following is a 69-amino-acid chain: Large ribosomal subunit protein uL29 (69 aa).

The protein belongs to the universal ribosomal protein uL29 family.

The chain is Large ribosomal subunit protein uL29 from Lachnoclostridium phytofermentans (strain ATCC 700394 / DSM 18823 / ISDg) (Clostridium phytofermentans).